A 164-amino-acid polypeptide reads, in one-letter code: UPF0304 protein ESA_00925 (164 aa).

Belongs to the UPF0304 family.

The sequence is that of UPF0304 protein ESA_00925 from Cronobacter sakazakii (strain ATCC BAA-894) (Enterobacter sakazakii).